Consider the following 874-residue polypeptide: Ribosome biogenesis protein ERB1 (874 aa).

Residues 1–148 (MAKKEVSASK…DAFAAADAAT (148 aa)) form a disordered region. Over residues 27–41 (QAVEKEEAEKEKEEG) the composition is skewed to basic and acidic residues. Acidic residues predominate over residues 55–77 (PESDSDDEGAAAAEEEEEEEEQQ). The span at 78 to 89 (QDVKELDLDKGE) shows a compositional bias: basic and acidic residues. Acidic residues-rich tracts occupy residues 95-104 (SDAEDFDSEE) and 128-139 (PKEDGDEQDEQD). The interval 312–429 (RFVPSKHEAK…LRLVPGYQDS (118 aa)) is required for interaction with NOP7. The required for interaction with YTM1 stretch occupies residues 429–465 (SVRERFERSLDLYLAPRLRKNKLNIDPESLIPELPSP). 2 WD repeats span residues 481 to 520 (GHTG…QVFK) and 529 to 569 (NGED…FEIE). Residues 593 to 602 (KVKGEDTKGD) are compositionally biased toward basic and acidic residues. A disordered region spans residues 593–640 (KVKGEDTKGDLDDDEEEEEEEEDDDDDEGQGKVKAHNSTAPAKKDVAK). The span at 603–620 (LDDDEEEEEEEEDDDDDE) shows a compositional bias: acidic residues. WD repeat units lie at residues 658 to 700 (QCRR…SQSP), 703 to 741 (KSKG…LLKK), 744 to 783 (PGVR…TPYK), 787 to 827 (YHEK…DLMT), and 843 to 874 (INQI…LWTT).

Belongs to the WD repeat BOP1/ERB1 family. In terms of assembly, component of the NOP7 complex, composed of ERB1, NOP7 and YTM1. The complex is held together by ERB1, which interacts with NOP7 via its N-terminal domain and with YTM1 via a high-affinity interaction between the seven-bladed beta-propeller domains of the 2 proteins. The NOP7 complex associates with the 66S pre-ribosome.

The protein resides in the nucleus. The protein localises to the nucleolus. It localises to the nucleoplasm. Functionally, component of the NOP7 complex, which is required for maturation of the 25S and 5.8S ribosomal RNAs and formation of the 60S ribosome. The sequence is that of Ribosome biogenesis protein ERB1 from Lodderomyces elongisporus (strain ATCC 11503 / CBS 2605 / JCM 1781 / NBRC 1676 / NRRL YB-4239) (Yeast).